Reading from the N-terminus, the 187-residue chain is MNISLIFANELITRAFGNQGKLPWQFIKEDMQFFQKTTENSVVVMGLNTWRSLPKMKKLGRDFIVISSTITEHEVLNNNIQIFKSFESFLEAFRDTTKPINVIGGVGLLSEAIEHASTVYMSSIHMVKPVHADVYVPVELMNKLYSDFKYPENILWVGDPIDSVYSLSIDKFVRPASLVGVPNDINT.

The region spanning 2-174 (NISLIFANEL…YSLSIDKFVR (173 aa)) is the DHFR domain.

It belongs to the dihydrofolate reductase family. As to quaternary structure, homodimer.

The enzyme catalyses (6S)-5,6,7,8-tetrahydrofolate + NADP(+) = 7,8-dihydrofolate + NADPH + H(+). It participates in cofactor biosynthesis; tetrahydrofolate biosynthesis; 5,6,7,8-tetrahydrofolate from 7,8-dihydrofolate: step 1/1. Key enzyme in folate metabolism. Catalyzes an essential reaction for de novo glycine and purine synthesis, and for DNA precursor synthesis. The chain is Dihydrofolate reductase type A10 (dfrA10) from Escherichia coli.